We begin with the raw amino-acid sequence, 72 residues long: Translation initiation factor IF-1 (72 aa).

Positions 1–72 constitute an S1-like domain; the sequence is MSKEEAIEVE…SRGRITYRAK (72 aa).

Belongs to the IF-1 family. As to quaternary structure, component of the 30S ribosomal translation pre-initiation complex which assembles on the 30S ribosome in the order IF-2 and IF-3, IF-1 and N-formylmethionyl-tRNA(fMet); mRNA recruitment can occur at any time during PIC assembly.

It is found in the cytoplasm. In terms of biological role, one of the essential components for the initiation of protein synthesis. Stabilizes the binding of IF-2 and IF-3 on the 30S subunit to which N-formylmethionyl-tRNA(fMet) subsequently binds. Helps modulate mRNA selection, yielding the 30S pre-initiation complex (PIC). Upon addition of the 50S ribosomal subunit IF-1, IF-2 and IF-3 are released leaving the mature 70S translation initiation complex. This chain is Translation initiation factor IF-1, found in Geobacter metallireducens (strain ATCC 53774 / DSM 7210 / GS-15).